Reading from the N-terminus, the 346-residue chain is uncharacterized protein (346 aa).

The tract at residues 322–346 (GRDGGYRETTSPPTGRGRNVRGSHA) is disordered.

This is an uncharacterized protein from Mycobacterium tuberculosis (strain CDC 1551 / Oshkosh).